The chain runs to 461 residues: Cysteine--tRNA ligase (461 aa).

A Zn(2+)-binding site is contributed by cysteine 28. Residues 30-40 carry the 'HIGH' region motif; that stretch reads ITVYDLCHIGH. Positions 209, 234, and 238 each coordinate Zn(2+). The 'KMSKS' region signature appears at 266–270; the sequence is KMSKS. Position 269 (lysine 269) interacts with ATP.

It belongs to the class-I aminoacyl-tRNA synthetase family. In terms of assembly, monomer. Requires Zn(2+) as cofactor.

It localises to the cytoplasm. The catalysed reaction is tRNA(Cys) + L-cysteine + ATP = L-cysteinyl-tRNA(Cys) + AMP + diphosphate. This Escherichia coli (strain K12 / MC4100 / BW2952) protein is Cysteine--tRNA ligase.